Here is a 118-residue protein sequence, read N- to C-terminus: Ribonuclease P protein component 4 (118 aa).

Residues Cys-59, Cys-62, Cys-85, and Cys-88 each contribute to the Zn(2+) site.

It belongs to the eukaryotic/archaeal RNase P protein component 4 family. In terms of assembly, consists of a catalytic RNA component and at least 4-5 protein subunits. Zn(2+) serves as cofactor.

It localises to the cytoplasm. The enzyme catalyses Endonucleolytic cleavage of RNA, removing 5'-extranucleotides from tRNA precursor.. Part of ribonuclease P, a protein complex that generates mature tRNA molecules by cleaving their 5'-ends. The chain is Ribonuclease P protein component 4 from Sulfolobus acidocaldarius (strain ATCC 33909 / DSM 639 / JCM 8929 / NBRC 15157 / NCIMB 11770).